Reading from the N-terminus, the 1487-residue chain is Major viral transcription factor ICP4 homolog (1487 aa).

3 disordered regions span residues 41–295, 310–370, and 803–1007; these read AAPD…LPPG, LAKT…AEEA, and PPTR…HTPR. The span at 66 to 75 shows a compositional bias: pro residues; that stretch reads VIPPPSPAPE. Low complexity-rich tracts occupy residues 165–193 and 201–213; these read PSSA…SSSS and DGAG…SSSS. A compositionally biased stretch (acidic residues) spans 214 to 224; that stretch reads DDSDSDEGGEE. The span at 235–272 shows a compositional bias: low complexity; it reads AAKTPSAAGSPGPSSGGDRPAAGAATPKSCRSGAASPG. Residues 273–285 are compositionally biased toward pro residues; it reads APAPAPASAPAPS. 3 stretches are compositionally biased toward low complexity: residues 807–829, 849–860, and 867–877; these read SQQP…AEGS, PSSHSQSPQHSQ, and ATTATCCRATQ. Residues 878–893 show a composition bias toward polar residues; the sequence is TNARSRGQQHQPQKAR. Positions 920–929 are enriched in basic residues; that stretch reads HGRPRGKSGK. The span at 938–951 shows a compositional bias: low complexity; sequence AAQAGASASFSSSA. Over residues 988–1007 the composition is skewed to basic and acidic residues; that stretch reads GPDRRGGFRRVPRGDCHTPR.

Belongs to the herpesviridae ICP4 family. Post-translationally, a long stretch of serine residues may be a major site of phosphorylation.

Its subcellular location is the host nucleus. This IE protein is a multifunctional protein capable of migrating to the nucleus, binding to DNA, trans-activating other viral genes, and autoregulating its own synthesis. This chain is Major viral transcription factor ICP4 homolog (IE), found in Equus caballus (Horse).